The chain runs to 281 residues: Pantothenate synthetase (281 aa).

ATP is bound at residue 30 to 37; that stretch reads MGALHRGH. The Proton donor role is filled by His-37. Gln-61 is a (R)-pantoate binding site. A beta-alanine-binding site is contributed by Gln-61. ATP is bound at residue 147 to 150; it reads GEKD. (R)-pantoate is bound at residue Gln-153. ATP is bound by residues Ile-176 and 184–187; that span reads LSSR.

It belongs to the pantothenate synthetase family. In terms of assembly, homodimer.

The protein localises to the cytoplasm. The catalysed reaction is (R)-pantoate + beta-alanine + ATP = (R)-pantothenate + AMP + diphosphate + H(+). The protein operates within cofactor biosynthesis; (R)-pantothenate biosynthesis; (R)-pantothenate from (R)-pantoate and beta-alanine: step 1/1. Functionally, catalyzes the condensation of pantoate with beta-alanine in an ATP-dependent reaction via a pantoyl-adenylate intermediate. The sequence is that of Pantothenate synthetase from Porphyromonas gingivalis (strain ATCC 33277 / DSM 20709 / CIP 103683 / JCM 12257 / NCTC 11834 / 2561).